The primary structure comprises 113 residues: Molt-inhibiting hormone (113 aa).

The first 35 residues, 1–35 (MMSLAHSKFSCQRTRLLAVVLLAALWSSSLQQAAA), serve as a signal peptide directing secretion. 3 disulfides stabilise this stretch: Cys-42/Cys-79, Cys-59/Cys-75, and Cys-62/Cys-88.

Belongs to the arthropod CHH/MIH/GIH/VIH hormone family.

It is found in the secreted. Inhibits Y-organs where molting hormone (ecdysteroid) is secreted. A molting cycle is initiated when MIH secretion diminishes or stops. In Callinectes sapidus (Blue crab), this protein is Molt-inhibiting hormone.